The primary structure comprises 98 residues: NADH-ubiquinone oxidoreductase chain 4L (98 aa).

A run of 3 helical transmembrane segments spans residues 1 to 21, 27 to 47, and 61 to 81; these read MIPTYMNIMLAFTISLLGMLT, VASLLCLEGMTMSLFIMTALI, and IILLVFAACEAAVGLALLISI.

Belongs to the complex I subunit 4L family. In terms of assembly, core subunit of respiratory chain NADH dehydrogenase (Complex I) which is composed of 45 different subunits.

The protein localises to the mitochondrion inner membrane. The catalysed reaction is a ubiquinone + NADH + 5 H(+)(in) = a ubiquinol + NAD(+) + 4 H(+)(out). Functionally, core subunit of the mitochondrial membrane respiratory chain NADH dehydrogenase (Complex I) which catalyzes electron transfer from NADH through the respiratory chain, using ubiquinone as an electron acceptor. Part of the enzyme membrane arm which is embedded in the lipid bilayer and involved in proton translocation. The sequence is that of NADH-ubiquinone oxidoreductase chain 4L (MT-ND4L) from Macaca sylvanus (Barbary macaque).